The following is a 456-amino-acid chain: Argininosuccinate lyase (456 aa).

This sequence belongs to the lyase 1 family. Argininosuccinate lyase subfamily.

Its subcellular location is the cytoplasm. It catalyses the reaction 2-(N(omega)-L-arginino)succinate = fumarate + L-arginine. The protein operates within amino-acid biosynthesis; L-arginine biosynthesis; L-arginine from L-ornithine and carbamoyl phosphate: step 3/3. The chain is Argininosuccinate lyase from Listeria monocytogenes serotype 4b (strain CLIP80459).